The following is a 210-amino-acid chain: Floral homeotic protein FBP1 (210 aa).

One can recognise an MADS-box domain in the interval 3–57; it reads RGKIEIKRIENSSNRQVTYSKRRNGILKKAKEISVLCDARVSVIIFASSGKMHEF. In terms of domain architecture, K-box spans 82 to 173; the sequence is HENLDNEINK…QLEIATMNRN (92 aa).

In terms of tissue distribution, petals.

The protein localises to the nucleus. Probable transcription factor. The polypeptide is Floral homeotic protein FBP1 (FBP1) (Petunia hybrida (Petunia)).